Consider the following 344-residue polypeptide: tRNA N6-adenosine threonylcarbamoyltransferase (344 aa).

Fe cation contacts are provided by histidine 112 and histidine 116. Substrate contacts are provided by residues 134-138 (LASGG), aspartate 167, glycine 180, and asparagine 280. Aspartate 308 lines the Fe cation pocket.

Belongs to the KAE1 / TsaD family. It depends on Fe(2+) as a cofactor.

The protein localises to the cytoplasm. The catalysed reaction is L-threonylcarbamoyladenylate + adenosine(37) in tRNA = N(6)-L-threonylcarbamoyladenosine(37) in tRNA + AMP + H(+). Its function is as follows. Required for the formation of a threonylcarbamoyl group on adenosine at position 37 (t(6)A37) in tRNAs that read codons beginning with adenine. Is involved in the transfer of the threonylcarbamoyl moiety of threonylcarbamoyl-AMP (TC-AMP) to the N6 group of A37, together with TsaE and TsaB. TsaD likely plays a direct catalytic role in this reaction. This Rickettsia conorii (strain ATCC VR-613 / Malish 7) protein is tRNA N6-adenosine threonylcarbamoyltransferase.